An 88-amino-acid polypeptide reads, in one-letter code: Large ribosomal subunit protein bL27 (88 aa).

Residues 1-22 (MAQKKAGGSSRNGRDSAGRRLG) are disordered.

It belongs to the bacterial ribosomal protein bL27 family.

The protein is Large ribosomal subunit protein bL27 of Gluconobacter oxydans (strain 621H) (Gluconobacter suboxydans).